The primary structure comprises 333 residues: Ribokinase (333 aa).

Substrate contacts are provided by residues 10 to 12 (NYD), 38 to 42 (GKGLN), and glutamate 149. ATP contacts are provided by residues asparagine 193 and 248–253 (TLGSRG). Aspartate 277 and threonine 279 together coordinate K(+). Residue 282–283 (GD) participates in ATP binding. Aspartate 283 provides a ligand contact to substrate. Aspartate 283 functions as the Proton acceptor in the catalytic mechanism. Residues threonine 313, arginine 316, glycine 318, and serine 322 each coordinate K(+).

It belongs to the carbohydrate kinase PfkB family. Ribokinase subfamily. In terms of assembly, homodimer. Mg(2+) serves as cofactor.

It localises to the cytoplasm. Its subcellular location is the nucleus. It catalyses the reaction D-ribose + ATP = D-ribose 5-phosphate + ADP + H(+). Its pathway is carbohydrate metabolism; D-ribose degradation; D-ribose 5-phosphate from beta-D-ribopyranose: step 2/2. Its activity is regulated as follows. Activated by a monovalent cation that binds near, but not in, the active site. The most likely occupant of the site in vivo is potassium. Ion binding induces a conformational change that may alter substrate affinity. Catalyzes the phosphorylation of ribose at O-5 in a reaction requiring ATP and magnesium. The resulting D-ribose-5-phosphate can then be used either for sythesis of nucleotides, histidine, and tryptophan, or as a component of the pentose phosphate pathway. The sequence is that of Ribokinase from Saccharomyces cerevisiae (strain ATCC 204508 / S288c) (Baker's yeast).